Consider the following 265-residue polypeptide: Tryptophan synthase alpha chain (265 aa).

Residues Glu49 and Asp60 each act as proton acceptor in the active site.

It belongs to the TrpA family. In terms of assembly, tetramer of two alpha and two beta chains.

The enzyme catalyses (1S,2R)-1-C-(indol-3-yl)glycerol 3-phosphate + L-serine = D-glyceraldehyde 3-phosphate + L-tryptophan + H2O. It functions in the pathway amino-acid biosynthesis; L-tryptophan biosynthesis; L-tryptophan from chorismate: step 5/5. The alpha subunit is responsible for the aldol cleavage of indoleglycerol phosphate to indole and glyceraldehyde 3-phosphate. The sequence is that of Tryptophan synthase alpha chain from Paracoccus denitrificans (strain Pd 1222).